Reading from the N-terminus, the 857-residue chain is Protein dalmatian (857 aa).

2 disordered regions span residues 1-50 (MVRT…KLSI) and 146-194 (VQKS…FFHR). Composition is skewed to polar residues over residues 146–156 (VQKSTQPQNIK) and 165–176 (SPCQQRIRSKSP). Residues Ser-173, Ser-175, Ser-184, and Ser-222 each carry the phosphoserine modification. The span at 251 to 271 (GKPRAKRTAKKVRPVGNRRKV) shows a compositional bias: basic residues. The segment at 251–281 (GKPRAKRTAKKVRPVGNRRKVSTKDNEPEPV) is disordered. Ser-405 carries the post-translational modification Phosphoserine. 2 disordered regions span residues 470 to 514 (SICP…NAEN) and 737 to 830 (PPRP…RDIE). The segment covering 771–781 (KQPRRTYVKER) has biased composition (basic and acidic residues). Residues 797-806 (SESEDEDEQD) show a composition bias toward acidic residues. The span at 807–816 (SHDKSLDSPE) shows a compositional bias: basic and acidic residues. Basic residues predominate over residues 817–826 (KKRHHVKRPR).

It is found in the nucleus. It localises to the chromosome. In terms of biological role, regulator of sister chromatid cohesion in mitosis. Probably involved in development of the central nervous system. This is Protein dalmatian (dmt) from Drosophila melanogaster (Fruit fly).